The following is a 1602-amino-acid chain: MAP kinase-activating death domain protein (1602 aa).

Residues 13-267 form the uDENN domain; the sequence is YLVIVGARHP…VPVSGQKRVD (255 aa). Positions 105–121 are enriched in basic and acidic residues; the sequence is PKEKAEGGAGPRGKEGA. The tract at residues 105 to 167 is disordered; sequence PKEKAEGGAG…GKRRAKAGNR (63 aa). A compositionally biased stretch (low complexity) spans 126 to 137; it reads ASEEAATESSES. Polar residues predominate over residues 138–156; it reads GSTLQPPSADSTPDVNQSP. At Ser-155 the chain carries Phosphoserine. Positions 157–166 are enriched in basic residues; the sequence is RGKRRAKAGN. A cDENN domain is found at 288–428; the sequence is RFTLVDFPLH…ESLELKKHLK (141 aa). The 135-residue stretch at 430–564 folds into the dDENN domain; that stretch reads ALASMSLNTQ…LNPSNYAFQR (135 aa). Disordered regions lie at residues 603–635 and 676–840; these read ALSVPPERDSESDPTDDSGSDSMDYDDSSSSYS and QPQK…NSTE. Residues 614–629 show a composition bias toward acidic residues; it reads SDPTDDSGSDSMDYDD. Phosphoserine is present on residues Ser-688 and Ser-691. The segment covering 688–698 has biased composition (polar residues); it reads SENSQENLPLR. Over residues 699–711 the composition is skewed to low complexity; that stretch reads SSSSTTASSSPST. Ser-778 carries the post-translational modification Phosphoserine. Positions 789 to 803 are enriched in polar residues; that stretch reads ESYTPRFSQHASGSR. 3 positions are modified to phosphoserine: Ser-812, Ser-817, and Ser-819. Positions 826–839 are enriched in low complexity; it reads RASSPNSTVSNNST. Phosphoserine is present on residues Ser-857, Ser-861, Ser-895, Ser-900, and Ser-909. Disordered stretches follow at residues 870-920, 1030-1089, and 1113-1231; these read KGAR…SSEN, KEPD…DTRS, and TEEK…RSSE. Over residues 911-920 the composition is skewed to polar residues; that stretch reads QGRSSNSSEN. Ser-1038 is subject to Phosphoserine. Thr-1040 and Thr-1045 each carry phosphothreonine. Phosphoserine is present on Ser-1089. Positions 1119 to 1134 are enriched in polar residues; it reads QISADSGVSLASASQR. A compositionally biased stretch (low complexity) spans 1151–1162; that stretch reads SSSQDSEVSNSS. Residues 1191–1209 are compositionally biased toward polar residues; sequence SRATLSDSEIETNSATSTI. The residue at position 1194 (Thr-1194) is a Phosphothreonine. A phosphoserine mark is found at Ser-1196 and Ser-1225. Positions 1295 to 1370 constitute a Death domain; the sequence is GMDQGPQEMI…GLVYSQQINE (76 aa).

This sequence belongs to the MADD family. In terms of assembly, interacts (via death domain) with TNFRSF1A (via death domain). Interacts with PIDD1. Interacts with YWHAZ. Interacts (via death domain) with KIF1B; links the motor KIF1B to Rab3-carrying vesicles in anterograde synaptic vesicle transport. Interacts with KIF1A. Interacts (via uDENN domain) with RAB3A, RAB3B, RAB3C and RAB3D; the GTP-bound form of the Rab proteins is preferred for interaction. As to expression, expressed in all tissues examined with the highest expression in brain.

It localises to the cell membrane. The protein localises to the cytoplasm. Its subcellular location is the cell projection. It is found in the axon. Functionally, guanyl-nucleotide exchange factor that regulates small GTPases of the Rab family. Converts GDP-bound inactive form of RAB27A and RAB27B to the GTP-bound active forms. Converts GDP-bound inactive form of RAB3A, RAB3C and RAB3D to the GTP-bound active forms, GTPases involved in synaptic vesicle exocytosis and vesicle secretion. Plays a role in synaptic vesicle formation and in vesicle trafficking at the neuromuscular junction. Involved in up-regulating a post-docking step of synaptic exocytosis in central synapses. Probably by binding to the motor proteins KIF1B and KIF1A, mediates motor-dependent transport of GTP-RAB3A-positive vesicles to the presynaptic nerve terminals. Plays a role in TNFA-mediated activation of the MAPK pathway, including ERK1/2. May link TNFRSF1A with MAP kinase activation. May be involved in the regulation of TNFA-induced apoptosis. In Rattus norvegicus (Rat), this protein is MAP kinase-activating death domain protein.